The following is a 319-amino-acid chain: Beta-ketoacyl-[acyl-carrier-protein] synthase III (319 aa).

Residues C113 and H246 contribute to the active site. The interval 247-251 (QANIR) is ACP-binding. Residue N276 is part of the active site.

This sequence belongs to the thiolase-like superfamily. FabH family. Homodimer.

The protein resides in the cytoplasm. The enzyme catalyses malonyl-[ACP] + acetyl-CoA + H(+) = 3-oxobutanoyl-[ACP] + CO2 + CoA. Its pathway is lipid metabolism; fatty acid biosynthesis. Functionally, catalyzes the condensation reaction of fatty acid synthesis by the addition to an acyl acceptor of two carbons from malonyl-ACP. Catalyzes the first condensation reaction which initiates fatty acid synthesis and may therefore play a role in governing the total rate of fatty acid production. Possesses both acetoacetyl-ACP synthase and acetyl transacylase activities. Its substrate specificity determines the biosynthesis of branched-chain and/or straight-chain of fatty acids. In Ehrlichia chaffeensis (strain ATCC CRL-10679 / Arkansas), this protein is Beta-ketoacyl-[acyl-carrier-protein] synthase III.